A 77-amino-acid chain; its full sequence is MSSSRFLILCIILISFFPLHECENGKSVESNKAMKPVCMPVNCNNKDKKLTCACCIGANPRNRCYNSRSQCTADCKL.

The first 22 residues, 1–22 (MSSSRFLILCIILISFFPLHEC), serve as a signal peptide directing secretion. Intrachain disulfides connect Cys38–Cys54, Cys43–Cys75, Cys52–Cys71, and Cys55–Cys64.

It belongs to the MEG family. In terms of tissue distribution, expressed in flowers.

The protein is EMBRYO SURROUNDING FACTOR 1-like protein 9 (ESFL9) of Arabidopsis thaliana (Mouse-ear cress).